We begin with the raw amino-acid sequence, 134 residues long: Beta-synuclein (134 aa).

2 consecutive repeat copies span residues 20-30 (EKTKQGVTEAA) and 31-41 (EKTKEGVLYVG). The interval 20 to 67 (EKTKQGVTEAAEKTKEGVLYVGSKTKEGVVQGVASVAEKTKEQASHLG) is 4 X 11 AA tandem repeats of [EGS]-K-T-K-[EQ]-[GQ]-V-X(4). The stretch at 42–56 (SKTKEGVVQGVASVA) is one 3; approximate repeat. Repeat unit 4 spans residues 57–67 (EKTKEQASHLG). Residues 97 to 134 (EVAQEAAEEPLIEPLMEPEGESYEEQPQEEYQEYEPEA) are disordered. Over residues 98–134 (VAQEAAEEPLIEPLMEPEGESYEEQPQEEYQEYEPEA) the composition is skewed to acidic residues. Residue serine 118 is modified to Phosphoserine; by BARK1, CK2 and GRK5.

Belongs to the synuclein family. Phosphorylated. Phosphorylation by G-protein coupled receptor kinases (GRK) is more efficient than phosphorylation by CK1, CK2 and CaM-kinase II. As to expression, specifically present in synapses around neurons but not in glial cells.

Its subcellular location is the cytoplasm. In terms of biological role, may be involved in neuronal plasticity. This Bos taurus (Bovine) protein is Beta-synuclein (SNCB).